We begin with the raw amino-acid sequence, 103 residues long: Large ribosomal subunit protein bL21 (103 aa).

It belongs to the bacterial ribosomal protein bL21 family. In terms of assembly, part of the 50S ribosomal subunit. Contacts protein L20.

Functionally, this protein binds to 23S rRNA in the presence of protein L20. The polypeptide is Large ribosomal subunit protein bL21 (Rhodococcus erythropolis (strain PR4 / NBRC 100887)).